The chain runs to 305 residues: Glycine--tRNA ligase alpha subunit (305 aa).

The protein belongs to the class-II aminoacyl-tRNA synthetase family. Tetramer of two alpha and two beta subunits.

The protein localises to the cytoplasm. It carries out the reaction tRNA(Gly) + glycine + ATP = glycyl-tRNA(Gly) + AMP + diphosphate. The sequence is that of Glycine--tRNA ligase alpha subunit from Streptococcus suis (strain 05ZYH33).